The primary structure comprises 111 residues: uncharacterized protein (111 aa).

A helical membrane pass occupies residues Val-64–Leu-86.

Its subcellular location is the membrane. This is an uncharacterized protein from Saccharomyces cerevisiae (strain ATCC 204508 / S288c) (Baker's yeast).